The sequence spans 104 residues: Replication factor A protein 3 (104 aa).

Belongs to the replication factor A protein 3 family. In terms of assembly, component of the heterotrimeric canonical replication protein A complex (RPA).

The protein resides in the nucleus. Functionally, as part of the replication protein A (RPA/RP-A), a single-stranded DNA-binding heterotrimeric complex, may play an essential role in DNA replication, recombination and repair. Binds and stabilizes single-stranded DNA intermediates, preventing complementary DNA reannealing and recruiting different proteins involved in DNA metabolism. This Schizosaccharomyces pombe (strain 972 / ATCC 24843) (Fission yeast) protein is Replication factor A protein 3 (ssb3).